Here is a 1052-residue protein sequence, read N- to C-terminus: Membrane-bound transcription factor site-1 protease (1052 aa).

Residues 1-17 (MKLVNIWLLLLVVLLCG) form the signal peptide. Residues 18 to 186 (KKHLGDRLGK…TGRHSSRRLL (169 aa)) constitute a propeptide that is removed on maturation. Residue asparagine 148 is glycosylated (N-linked (GlcNAc...) asparagine). Phosphoserine is present on serine 168. At 187–999 (RAIPRQVAQT…MPGRYNQEVG (813 aa)) the chain is on the lumenal side. The 283-residue stretch at 190–472 (PRQVAQTLQA…HGKLDLLRAY (283 aa)) folds into the Peptidase S8 domain. Residue aspartate 218 is the Charge relay system of the active site. N-linked (GlcNAc...) asparagine glycosylation occurs at asparagine 236. The Charge relay system role is filled by histidine 249. The N-linked (GlcNAc...) asparagine glycan is linked to asparagine 305. Residue serine 414 is the Charge relay system of the active site. Residues asparagine 515 and asparagine 728 are each glycosylated (N-linked (GlcNAc...) asparagine). A compositionally biased stretch (polar residues) spans 877 to 887 (PSLSHSGNRQR). The segment at 877 to 900 (PSLSHSGNRQRPPSGAGLAPPERM) is disordered. Asparagine 939 carries N-linked (GlcNAc...) asparagine glycosylation. A helical membrane pass occupies residues 1000–1022 (QTIPVFAFLGAMVALAFFVVQIS). At 1023–1052 (KAKSRPKRRRPRAKRPQLAQQAHPARTPSV) the chain is on the cytoplasmic side. The segment covering 1026–1037 (SRPKRRRPRAKR) has biased composition (basic residues). The segment at 1026 to 1052 (SRPKRRRPRAKRPQLAQQAHPARTPSV) is disordered.

It belongs to the peptidase S8 family. Interacts with LYSET; this interaction bridges GNPTAB to MBTPS1. It depends on Ca(2+) as a cofactor. The 148 kDa zymogen is processed progressively into two membrane-bound 120 and 106 kDa forms in the endoplasmic reticulum, and late into a secreted 98 kDa form. The propeptide is autocatalytically removed through an intramolecular cleavage after Leu-186. Further cleavage generates 14, 10, and 8 kDa intermediates. Widely expressed. In adult rat, highly expressed in anterior pituitary, thyroid and adrenal glands and in liver. In 2-day old rat, detected in developing skin, striated muscles, cardiac muscles, bones, teeth and internal organs. Highly expressed in retina, cerebellum, pituitary, submaxillary, thyroid and adrenal glands, molars, thymus, kidney and intestine.

It localises to the endoplasmic reticulum membrane. The protein localises to the golgi apparatus membrane. The enzyme catalyses Processes precursors containing basic and hydrophobic/aliphatic residues at P4 and P2, respectively, with a relatively relaxed acceptance of amino acids at P1 and P3.. Its activity is regulated as follows. Inhibited by divalent copper and zinc ions, but not by nickel or cobalt. Inhibited by its prosegment, but not smaller fragments. Inhibited by 4-(2-aminoethyl)benzenesulfonyl fluoride (AEBSF), a serine protease inhibitor. Functionally, serine protease that cleaves after hydrophobic or small residues, provided that Arg or Lys is in position P4: known substrates include SREBF1/SREBP1, SREBF2/SREBP2, BDNF, GNPTAB, ATF6, ATF6B and FAM20C. Cleaves substrates after Arg-Ser-Val-Leu (SREBP2), Arg-His-Leu-Leu (ATF6), Arg-Gly-Leu-Thr (BDNF) and its own propeptide after Arg-Arg-Leu-Leu. Catalyzes the first step in the proteolytic activation of the sterol regulatory element-binding proteins (SREBPs) SREBF1/SREBP1 and SREBF2/SREBP2. Also mediates the first step in the proteolytic activation of the cyclic AMP-dependent transcription factor ATF-6 (ATF6 and ATF6B). Mediates the protein cleavage of GNPTAB into subunit alpha and beta, thereby participating in biogenesis of lysosomes. Cleaves the propeptide from FAM20C which is required for FAM20C secretion from the Golgi apparatus membrane and for enhancement of FAM20C kinase activity, promoting osteoblast differentiation and biomineralization. Involved in the regulation of M6P-dependent Golgi-to-lysosome trafficking of lysosomal enzymes. It is required for the activation of CREB3L2/BBF2H7, a transcriptional activator of MIA3/TANGO and other genes controlling mega vesicle formation. Therefore, it plays a key role in the regulation of mega vesicle-mediated collagen trafficking. In astrocytes and osteoblasts, upon DNA damage and ER stress, mediates the first step of the regulated intramembrane proteolytic activation of the transcription factor CREB3L1, leading to the inhibition of cell-cycle progression. The chain is Membrane-bound transcription factor site-1 protease (Mbtps1) from Rattus norvegicus (Rat).